Here is a 718-residue protein sequence, read N- to C-terminus: Ribosome-releasing factor 2, mitochondrial (718 aa).

A mitochondrion-targeting transit peptide spans 1-29 (MLKCAWQNGPRQSNRWLWQLSNQIWKRSY). Residues 31–310 (SKIRNIGILA…AVNSYLPAPE (280 aa)) enclose the tr-type G domain. Residues 40–47 (AHIDAGKT), 104–108 (DTPGH), and 158–161 (NKMD) each bind GTP.

The protein belongs to the TRAFAC class translation factor GTPase superfamily. Classic translation factor GTPase family. EF-G/EF-2 subfamily.

The protein localises to the mitochondrion. Functionally, mitochondrial GTPase that mediates the disassembly of ribosomes from messenger RNA at the termination of mitochondrial protein biosynthesis. Not involved in the GTP-dependent ribosomal translocation step during translation elongation. The polypeptide is Ribosome-releasing factor 2, mitochondrial (Drosophila erecta (Fruit fly)).